A 212-amino-acid polypeptide reads, in one-letter code: Large ribosomal subunit protein uL3 (212 aa).

Q153 is modified (N5-methylglutamine).

This sequence belongs to the universal ribosomal protein uL3 family. Part of the 50S ribosomal subunit. Forms a cluster with proteins L14 and L19. Methylated by PrmB.

Its function is as follows. One of the primary rRNA binding proteins, it binds directly near the 3'-end of the 23S rRNA, where it nucleates assembly of the 50S subunit. This Shewanella woodyi (strain ATCC 51908 / MS32) protein is Large ribosomal subunit protein uL3.